The chain runs to 190 residues: MEKEEVLEIFSKLGVINKGHFLLTSGKHSDTYLQCAKIFQYPKYSEIFSKELALKFKGHEIDVVIGPAIGGIILAYEVARQVGAKALFAEREEGVMKLRRGFEIKEGENVLVVEDVVTTGGSVKEVINLVNSLKGNVIGVGSIVDRSDGKVNFEVPFKSVVSLYVETYEKEECPLCKEGIPLVKPGSRKF.

114-122 contributes to the 5-phospho-alpha-D-ribose 1-diphosphate binding site; sequence EDVVTTGGS. Positions 118 and 146 each coordinate orotate.

Belongs to the purine/pyrimidine phosphoribosyltransferase family. PyrE subfamily. As to quaternary structure, homodimer. The cofactor is Mg(2+).

It carries out the reaction orotidine 5'-phosphate + diphosphate = orotate + 5-phospho-alpha-D-ribose 1-diphosphate. The protein operates within pyrimidine metabolism; UMP biosynthesis via de novo pathway; UMP from orotate: step 1/2. Catalyzes the transfer of a ribosyl phosphate group from 5-phosphoribose 1-diphosphate to orotate, leading to the formation of orotidine monophosphate (OMP). This chain is Orotate phosphoribosyltransferase, found in Thermoanaerobacter sp. (strain X514).